The chain runs to 315 residues: tRNA dimethylallyltransferase (315 aa).

15 to 22 (GPTACGKS) contacts ATP. 17-22 (TACGKS) is a substrate binding site. Interaction with substrate tRNA stretches follow at residues 40–43 (DSAL) and 162–166 (QRLIR).

It belongs to the IPP transferase family. As to quaternary structure, monomer. Mg(2+) serves as cofactor.

It carries out the reaction adenosine(37) in tRNA + dimethylallyl diphosphate = N(6)-dimethylallyladenosine(37) in tRNA + diphosphate. Catalyzes the transfer of a dimethylallyl group onto the adenine at position 37 in tRNAs that read codons beginning with uridine, leading to the formation of N6-(dimethylallyl)adenosine (i(6)A). In Buchnera aphidicola subsp. Acyrthosiphon pisum (strain APS) (Acyrthosiphon pisum symbiotic bacterium), this protein is tRNA dimethylallyltransferase.